The following is a 209-amino-acid chain: Somatotropin (209 aa).

The signal sequence occupies residues 1–22; that stretch reads MGQVFLLMPVLLVAGYLSLGAA. His38 contacts Zn(2+). Cys71 and Cys182 are oxidised to a cystine. Glu191 serves as a coordination point for Zn(2+). Cys199 and Cys207 form a disulfide bridge.

It belongs to the somatotropin/prolactin family.

The protein localises to the secreted. Its function is as follows. Growth hormone plays an important role in growth control and is involved in the regulation of several anabolic processes. Implicated as an osmoregulatory substance important for seawater adaptation. The protein is Somatotropin (gh) of Esox lucius (Northern pike).